The following is an 88-amino-acid chain: MSETNERNRRHVYQGRVVSDKMDKTITVVVDTYKNHPVYNKRFRYSKKYYAQDENNEAKVGDTVRIMETRPLSRKKRFRLVKIVKKSV.

It belongs to the universal ribosomal protein uS17 family. As to quaternary structure, part of the 30S ribosomal subunit.

One of the primary rRNA binding proteins, it binds specifically to the 5'-end of 16S ribosomal RNA. This Lactobacillus acidophilus (strain ATCC 700396 / NCK56 / N2 / NCFM) protein is Small ribosomal subunit protein uS17.